The primary structure comprises 106 residues: CLAVATA3/ESR (CLE)-related protein 21 (106 aa).

Residues 1–31 (MLILSSRYAMKRDVLIIVIFTVLVLIIISRS) form the signal peptide. N47 is a glycosylation site (N-linked (GlcNAc...) asparagine). Residues 72–82 (KVRRRSSRFRR) are compositionally biased toward basic residues. The tract at residues 72–106 (KVRRRSSRFRRKTDGDEEEEEKRSIPTGPNPLHNK) is disordered. Residues P97 and P100 each carry the hydroxyproline modification. The O-linked (Ara...) hydroxyproline glycan is linked to P100.

Belongs to the CLV3/ESR signal peptide family. In terms of processing, the O-glycosylation (arabinosylation) of the hydroxyproline Pro-100 enhances binding affinity of the CLE21p peptide for its receptor. In terms of tissue distribution, mostly expressed in leaves and apex, and, to a lower extent, in seedlings, flowers, stems and siliques.

The protein resides in the secreted. It localises to the extracellular space. In terms of biological role, extracellular signal peptide that regulates cell fate. Represses root apical meristem maintenance. Regulates the transition of protophloem cells from proliferation to differentiation, thus impinging on postembryonic growth capacity of the root meristem; this signaling pathway requires CRN and CLV2. In Arabidopsis thaliana (Mouse-ear cress), this protein is CLAVATA3/ESR (CLE)-related protein 21.